The sequence spans 265 residues: Palmitoyltransferase ZDHHC21 (265 aa).

Topologically, residues 1 to 16 are cytoplasmic; the sequence is MGLRIHFVVDPHGWCC. A helical transmembrane segment spans residues 17 to 37; that stretch reads MGLIVFVWLYNIVLIPKIVLF. Topologically, residues 38–44 are extracellular; sequence PHYEEGH. The chain crosses the membrane as a helical span at residues 45-65; that stretch reads IPGILIIIFYGISIFCLVALV. The Cytoplasmic segment spans residues 66 to 133; the sequence is RASITDPGRL…NNCVGEDNHW (68 aa). Residues 90–140 form the DHHC domain; it reads ELCNKCNLMRPKRSHHCSRCGHCVRRMDHHCPWINNCVGEDNHWLFLQLCF. The active-site S-palmitoyl cysteine intermediate is Cys-120. A helical transmembrane segment spans residues 134–154; sequence LFLQLCFYTELLTCYALMFSF. Topologically, residues 155-185 are extracellular; sequence CHYYYFLPLKKRNLDLFVFRHELAIMRLAAF. Residues 186–206 traverse the membrane as a helical segment; sequence MGITMLVGITGLFYTQLIGII. Residues 207-265 are Cytoplasmic-facing; that stretch reads TDTTSIEKMSNCCEDISRPRKPWQQTFSEVFGTRWKILWFIPFRQRQPLRVPYHFANHV.

This sequence belongs to the DHHC palmitoyltransferase family. As to expression, widely expressed.

It localises to the golgi apparatus membrane. Its subcellular location is the golgi apparatus. It is found in the cis-Golgi network membrane. The protein resides in the cell membrane. It carries out the reaction L-cysteinyl-[protein] + hexadecanoyl-CoA = S-hexadecanoyl-L-cysteinyl-[protein] + CoA. Functionally, palmitoyltransferase that catalyzes the addition of palmitate onto various protein substrates. Palmitoylates sex steroid hormone receptors, including ESR1, PGR and AR, thereby regulating their targeting to the plasma membrane. This affects rapid intracellular signaling by sex hormones via ERK and AKT kinases and the generation of cAMP, but does not affect that mediated by their nuclear receptor. Palmitoylates FYN, regulates its localization in hair follicles and plays a key role in epidermal homeostasis and hair follicle differentiation. Through the palmitoylation of PLCB1 and the regulation of PLCB1 downstream signaling may indirectly regulate the function of the endothelial barrier and the adhesion of leukocytes to the endothelium. Also has a palmitoyltransferase activity toward ADRA1D, positively regulating its activity and expression and may thereby play a role in vascular contraction. May also palmitoylate eNOS and LCK. The chain is Palmitoyltransferase ZDHHC21 from Homo sapiens (Human).